The chain runs to 520 residues: Hydroxymethylglutaryl-CoA synthase, cytoplasmic (520 aa).

Residue S4 is modified to Phosphoserine. A44 lines the (3S)-3-hydroxy-3-methylglutaryl-CoA pocket. CoA is bound at residue 44–46 (AGK). K46 bears the N6-acetyllysine mark. E95 functions as the Proton donor/acceptor in the catalytic mechanism. Residues C129, N167, T171, S221, and H264 each coordinate (3S)-3-hydroxy-3-methylglutaryl-CoA. The active-site Acyl-thioester intermediate is the C129. A CoA-binding site is contributed by N167. S221 provides a ligand contact to CoA. The active-site Proton donor/acceptor is the H264. Residues K269 and K273 each coordinate CoA. Residues K273, N343, and S377 each contribute to the (3S)-3-hydroxy-3-methylglutaryl-CoA site. At K273 the chain carries N6-acetyllysine. Phosphothreonine is present on T476. A disordered region spans residues 492–520 (HIPSPAKKVPRLPATAAEPEAAVISNGEH). S495 and S516 each carry phosphoserine.

Belongs to the thiolase-like superfamily. HMG-CoA synthase family. Homodimer.

The protein resides in the cytoplasm. The catalysed reaction is acetoacetyl-CoA + acetyl-CoA + H2O = (3S)-3-hydroxy-3-methylglutaryl-CoA + CoA + H(+). It participates in metabolic intermediate biosynthesis; (R)-mevalonate biosynthesis; (R)-mevalonate from acetyl-CoA: step 2/3. Functionally, catalyzes the condensation of acetyl-CoA with acetoacetyl-CoA to form HMG-CoA, which is converted by HMG-CoA reductase (HMGCR) into mevalonate, a precursor for cholesterol synthesis. The sequence is that of Hydroxymethylglutaryl-CoA synthase, cytoplasmic from Pongo abelii (Sumatran orangutan).